A 266-amino-acid polypeptide reads, in one-letter code: Cell division cycle-associated protein 3 (266 aa).

Residues Met1–Pro84 are disordered. Phosphoserine occurs at positions 29 and 31. Residues Ala32–Gln46 are compositionally biased toward polar residues. Thr37 carries the phosphothreonine modification. Ser44 and Ser67 each carry phosphoserine. Residue Thr75 is modified to Phosphothreonine. The interval Lys90–Tyr119 is F-box-like. At Ser93 the chain carries Phosphoserine. Disordered regions lie at residues Asp120–Asn225 and Lys242–Ser266. Positions Leu143–Gln156 are enriched in basic and acidic residues. Residues Ser157–Asp168 are compositionally biased toward polar residues. A Phosphoserine modification is found at Ser197. Thr200 is modified (phosphothreonine). The span at Gln203–Leu213 shows a compositional bias: polar residues. A Phosphoserine modification is found at Ser207. Thr210 is subject to Phosphothreonine. Over residues Pro250–Gln259 the composition is skewed to basic and acidic residues. The KEN box signature appears at Lys256 to Asn258.

As to quaternary structure, interacts with SKP1. Part of a SCF (SKP1-cullin-F-box) protein ligase complex. In terms of processing, ubiquitinated and degraded by the APC/C-Cdh1 complex.

The protein resides in the cytoplasm. The protein localises to the cytosol. Its pathway is protein modification; protein ubiquitination. In terms of biological role, F-box-like protein which is required for entry into mitosis. Acts by participating in E3 ligase complexes that mediate the ubiquitination and degradation of WEE1 kinase at G2/M phase. The polypeptide is Cell division cycle-associated protein 3 (Cdca3) (Mus musculus (Mouse)).